Here is a 417-residue protein sequence, read N- to C-terminus: Autophagy-related protein 18 (417 aa).

WD repeat units lie at residues 1–36 (MSMN…KSYE), 76–114 (ELTF…LVYT), 185–225 (AHKS…KLYQ), and 230–269 (SMPS…GLSK). A L/FRRG motif motif is present at residues 226 to 230 (FRRGS). The tract at residues 267–300 (LSKTSSPSRKLESSRGSGDESAVESASSEMSSRK) is disordered. Over residues 285–296 (DESAVESASSEM) the composition is skewed to low complexity. 2 WD repeats span residues 300 to 346 (KHNG…AWIK) and 355 to 395 (GGSG…GGEG).

This sequence belongs to the WD repeat PROPPIN family. In terms of assembly, component of the PI(3,5)P2 regulatory complex.

It localises to the preautophagosomal structure membrane. It is found in the vacuole membrane. The protein localises to the endosome membrane. The PI(3,5)P2 regulatory complex regulates both the synthesis and turnover of phosphatidylinositol 3,5-bisphosphate (PtdIns(3,5)P2). Necessary for proper vacuole morphology. Plays an important role in osmotically-induced vacuole fragmentation. Required for cytoplasm to vacuole transport (Cvt) vesicle formation, pexophagy and starvation-induced autophagy. Involved in correct ATG9 trafficking to the pre-autophagosomal structure. Might also be involved in premeiotic DNA replication. The chain is Autophagy-related protein 18 (ATG18) from Coccidioides immitis (strain RS) (Valley fever fungus).